The primary structure comprises 248 residues: Ubiquinone biosynthesis O-methyltransferase (248 aa).

The S-adenosyl-L-methionine site is built by arginine 41, glycine 72, aspartate 93, and methionine 136.

This sequence belongs to the methyltransferase superfamily. UbiG/COQ3 family.

It catalyses the reaction a 3-demethylubiquinol + S-adenosyl-L-methionine = a ubiquinol + S-adenosyl-L-homocysteine + H(+). The catalysed reaction is a 3-(all-trans-polyprenyl)benzene-1,2-diol + S-adenosyl-L-methionine = a 2-methoxy-6-(all-trans-polyprenyl)phenol + S-adenosyl-L-homocysteine + H(+). It functions in the pathway cofactor biosynthesis; ubiquinone biosynthesis. Its function is as follows. O-methyltransferase that catalyzes the 2 O-methylation steps in the ubiquinone biosynthetic pathway. In Sinorhizobium medicae (strain WSM419) (Ensifer medicae), this protein is Ubiquinone biosynthesis O-methyltransferase.